Reading from the N-terminus, the 336-residue chain is Glutamyl endopeptidase (336 aa).

An N-terminal signal peptide occupies residues M1–A29. The propeptide occupies L30–N68. The disordered stretch occupies residues A34–L61. Low complexity predominate over residues P39 to K51. Catalysis depends on charge relay system residues H119, D161, and S237. Residues F283–A336 form a disordered region. Residues D286–A336 show a composition bias toward low complexity. 11 tandem repeats follow at residues P289–N291, P292–N294, P295–N297, P298–N300, P301–N303, P304–N306, P310–N312, P313–N315, P316–N318, P319–N321, and P322–N324. An 11 X 3 AA repeats of P-[DN]-N region spans residues P289–N324.

The protein belongs to the peptidase S1B family. In terms of processing, proteolytically cleaved by aureolysin (aur). This cleavage leads to the activation of SspA.

The protein localises to the secreted. It catalyses the reaction Preferential cleavage: Glu-|-Xaa, Asp-|-Xaa.. Its function is as follows. Preferentially cleaves peptide bonds on the carboxyl-terminal side of aspartate and glutamate. Along with other extracellular proteases it is involved in colonization and infection of human tissues. Required for proteolytic maturation of thiol protease SspB and inactivation of SspC, an inhibitor of SspB. It is the most important protease for degradation of fibronectin-binding protein (FnBP) and surface protein A, which are involved in adherence to host cells. May also protect bacteria against host defense mechanism by cleaving the immunoglobulin classes IgG, IgA and IgM. May be involved in the stability of secreted lipases. This Staphylococcus aureus (strain COL) protein is Glutamyl endopeptidase (sspA).